We begin with the raw amino-acid sequence, 88 residues long: Translation initiation factor IF-1 2 (88 aa).

Residues methionine 1–leucine 72 form the S1-like domain.

Belongs to the IF-1 family. In terms of assembly, component of the 30S ribosomal translation pre-initiation complex which assembles on the 30S ribosome in the order IF-2 and IF-3, IF-1 and N-formylmethionyl-tRNA(fMet); mRNA recruitment can occur at any time during PIC assembly.

The protein resides in the cytoplasm. Functionally, one of the essential components for the initiation of protein synthesis. Stabilizes the binding of IF-2 and IF-3 on the 30S subunit to which N-formylmethionyl-tRNA(fMet) subsequently binds. Helps modulate mRNA selection, yielding the 30S pre-initiation complex (PIC). Upon addition of the 50S ribosomal subunit IF-1, IF-2 and IF-3 are released leaving the mature 70S translation initiation complex. The polypeptide is Translation initiation factor IF-1 2 (Acidovorax sp. (strain JS42)).